Consider the following 379-residue polypeptide: Cytochrome bd-I ubiquinol oxidase subunit 2 (379 aa).

Met-1 is modified (N-formylmethionine). The Cytoplasmic portion of the chain corresponds to 1–8 (MIDYEVLR). The chain crosses the membrane as a helical span at residues 9 to 28 (FIWWLLVGVLLIGFAVTDGF). Over 29–79 (DMGVGMLTRFLGRNDTERRIMINSIAPHWDGNQVWLITAGGALFAAWPMVY) the chain is Periplasmic. Residues 80-99 (AAAFSGFYVAMILVLASLFF) traverse the membrane as a helical segment. Over 100 to 122 (RPVGFDYRSKIEETRWRNMWDWG) the chain is Cytoplasmic. Residues 123-142 (IFIGSFVPPLVIGVAFGNLL) form a helical membrane-spanning segment. Residues 143–164 (QGVPFNVDEYLRLYYTGNFFQL) lie on the Periplasmic side of the membrane. The helical transmembrane segment at 165–184 (LNPFGLLAGVVSVGMIITQG) threads the bilayer. Topologically, residues 185–205 (ATYLQMRTVGELHLRTRATAQ) are cytoplasmic. A helical transmembrane segment spans residues 206–225 (VAALVTLVCFALAGVWVMYG). At 226-262 (IDGYVVKSTMDHYAASNPLNKEVVREAGAWLVNFNNT) the chain is on the periplasmic side. The chain crosses the membrane as a helical span at residues 263 to 282 (PILWAIPALGVVLPLLTILT). Residues 283–292 (ARMDKAAWAF) lie on the Cytoplasmic side of the membrane. A helical membrane pass occupies residues 293–312 (VFSSLTLACIILTAGIAMFP). Over 313-336 (FVMPSSTMMNASLTMWDATSSQLT) the chain is Periplasmic. A helical transmembrane segment spans residues 337–356 (LNVMTWVAVVLVPIILLYTA). Over 357–379 (WCYWKMFGRITKEDIERNTHSLY) the chain is Cytoplasmic.

It belongs to the cytochrome ubiquinol oxidase subunit 2 family. In terms of assembly, heterodimer of subunits I and II. Heme b is required as a cofactor. It depends on heme d cis-diol as a cofactor.

It localises to the cell inner membrane. The enzyme catalyses 2 a ubiquinol + O2(in) + 4 H(+)(in) = 2 a ubiquinone + 2 H2O(in) + 4 H(+)(out). It functions in the pathway energy metabolism; oxidative phosphorylation. A terminal oxidase that produces a proton motive force by the vectorial transfer of protons across the inner membrane. It is the component of the aerobic respiratory chain of E.coli that predominates when cells are grown at low aeration. Generates a proton motive force using protons and electrons from opposite sides of the membrane to generate H(2)O, transferring 1 proton/electron. This chain is Cytochrome bd-I ubiquinol oxidase subunit 2 (cydB), found in Escherichia coli O157:H7.